A 213-amino-acid polypeptide reads, in one-letter code: ATP phosphoribosyltransferase (213 aa).

This sequence belongs to the ATP phosphoribosyltransferase family. Short subfamily. As to quaternary structure, heteromultimer composed of HisG and HisZ subunits.

The protein localises to the cytoplasm. It carries out the reaction 1-(5-phospho-beta-D-ribosyl)-ATP + diphosphate = 5-phospho-alpha-D-ribose 1-diphosphate + ATP. Its pathway is amino-acid biosynthesis; L-histidine biosynthesis; L-histidine from 5-phospho-alpha-D-ribose 1-diphosphate: step 1/9. Its function is as follows. Catalyzes the condensation of ATP and 5-phosphoribose 1-diphosphate to form N'-(5'-phosphoribosyl)-ATP (PR-ATP). Has a crucial role in the pathway because the rate of histidine biosynthesis seems to be controlled primarily by regulation of HisG enzymatic activity. The protein is ATP phosphoribosyltransferase of Bacillus pumilus (strain SAFR-032).